Consider the following 184-residue polypeptide: CASP-like protein 1U2 (184 aa).

Residues 1 to 16 (MSYGCQVSDDEPNGSK) are Cytoplasmic-facing. Residues 17 to 37 (AVSLLLRLSTLALALTSAVVM) traverse the membrane as a helical segment. The Extracellular segment spans residues 38-62 (ATASECTVVQLNGVVATITYKDFPP). A helical membrane pass occupies residues 63–83 (FVYLVGFNIAAAMLEAAAIYL). Residues 84–100 (RLSTGGGDDDDEGFKGK) lie on the Cytoplasmic side of the membrane. Residues 101 to 121 (LPGILLVVIDVAVQALVYTAT) form a helical membrane-spanning segment. The Extracellular portion of the chain corresponds to 122–153 (GGAFAAVSAYGPQINACGAGAGRFCGQVHQSK). The chain crosses the membrane as a helical span at residues 154–174 (LLSFAGSAAVGLAVVFRDVSL). At 175–184 (PFSLWPTSSD) the chain is on the cytoplasmic side.

Belongs to the Casparian strip membrane proteins (CASP) family. As to quaternary structure, homodimer and heterodimers.

The protein localises to the cell membrane. The sequence is that of CASP-like protein 1U2 from Oryza sativa subsp. japonica (Rice).